The following is a 278-amino-acid chain: Rhomboid protease GlpG (278 aa).

The next 6 helical transmembrane spans lie at 94 to 114 (AGPL…LMLI), 143 to 163 (AFLH…WYLG), 175 to 195 (LLVL…LFSG), 196 to 216 (ANFG…WLTG), 224 to 241 (ISLP…LIAG), and 245 to 267 (ILGL…LMAF). The active-site Nucleophile is the Ser-202. The active site involves His-255.

It belongs to the peptidase S54 family.

It localises to the cell inner membrane. It carries out the reaction Cleaves type-1 transmembrane domains using a catalytic dyad composed of serine and histidine that are contributed by different transmembrane domains.. Functionally, rhomboid-type serine protease that catalyzes intramembrane proteolysis. This chain is Rhomboid protease GlpG, found in Yersinia pestis bv. Antiqua (strain Antiqua).